Consider the following 78-residue polypeptide: Translation initiation factor IF-1 (78 aa).

Positions 2–78 constitute an S1-like domain; that stretch reads SKNNLNETES…TRARITYRFK (77 aa).

This sequence belongs to the IF-1 family. Component of the 30S ribosomal translation pre-initiation complex which assembles on the 30S ribosome in the order IF-2 and IF-3, IF-1 and N-formylmethionyl-tRNA(fMet); mRNA recruitment can occur at any time during PIC assembly.

The protein localises to the cytoplasm. Its function is as follows. One of the essential components for the initiation of protein synthesis. Stabilizes the binding of IF-2 and IF-3 on the 30S subunit to which N-formylmethionyl-tRNA(fMet) subsequently binds. Helps modulate mRNA selection, yielding the 30S pre-initiation complex (PIC). Upon addition of the 50S ribosomal subunit IF-1, IF-2 and IF-3 are released leaving the mature 70S translation initiation complex. This Onion yellows phytoplasma (strain OY-M) protein is Translation initiation factor IF-1.